Reading from the N-terminus, the 248-residue chain is MEQFKGLQKTLYIWTDSADLDKRVEKVKSATGGEVALENVHRLSFSSYANSSFDLIVIECAQLTDNYVKLLHMLKPSGKLHLVAFIGPAGSLLQEVKLSGFINCREDADDALTAEKPGYETGSSARLSFAKKDASALNVWKISGDDEELIDEEDLLDEEDKQKPDPAGLRVCSTTGKRKACKNCSCGLAEELESEKQSKAATENAKSSCGNCYLGDAFRCSTCPYLGMPAFKPGEKVQLADNLLKSDI.

Residues 4-129 form an N-terminal SAM-like domain region; sequence FKGLQKTLYI…ETGSSARLSF (126 aa). The interval 130–161 is linker; it reads AKKDASALNVWKISGDDEELIDEEDLLDEEDK. Residues Cys172, Cys181, Cys184, and Cys186 each coordinate [2Fe-2S] cluster. The segment at 172 to 186 is fe-S binding site A; that stretch reads CSTTGKRKACKNCSC. [4Fe-4S] cluster contacts are provided by Cys209, Cys212, Cys220, and Cys223. 2 short sequence motifs (cx2C motif) span residues 209–212 and 220–223; these read CGNC and CSTC. Residues 209 to 223 form a fe-S binding site B region; sequence CGNCYLGDAFRCSTC.

The protein belongs to the anamorsin family. In terms of assembly, monomer. It depends on [2Fe-2S] cluster as a cofactor. Requires [4Fe-4S] cluster as cofactor.

The protein localises to the cytoplasm. The protein resides in the mitochondrion intermembrane space. Functionally, component of the cytosolic iron-sulfur (Fe-S) protein assembly (CIA) machinery. Required for the maturation of extramitochondrial Fe-S proteins. Part of an electron transfer chain functioning in an early step of cytosolic Fe-S biogenesis, facilitating the de novo assembly of a [4Fe-4S] cluster on the cytosolic Fe-S scaffold complex. Electrons are transferred from NADPH via a FAD- and FMN-containing diflavin oxidoreductase. Together with the diflavin oxidoreductase, also required for the assembly of the diferric tyrosyl radical cofactor of ribonucleotide reductase (RNR), probably by providing electrons for reduction during radical cofactor maturation in the catalytic small subunit. This is Anamorsin homolog from Drosophila ananassae (Fruit fly).